The primary structure comprises 241 residues: Small ribosomal subunit protein uS2 (241 aa).

It belongs to the universal ribosomal protein uS2 family.

In Escherichia coli O127:H6 (strain E2348/69 / EPEC), this protein is Small ribosomal subunit protein uS2.